The sequence spans 296 residues: MHKSVLLKEVTDFLSNPCPKIHIDATLGLGGHAKALLEVCKDTFLIGIDKDENAIEIAKEKLKGFNAVFYHGSFKDFDIVLKEEGLLYFDSILFDFGVSSLQLDEEEGFSFQREDFLDMRMDKRQQKTAYIVINTYKEKELADIFYKYGEERLSKKIARSIVEKRKKKPIETTKELVDIVSSCYPYKYSKINPATKVFQALRIEVNSELEDIKIALSKLLDFAKEGSKFAFISFHSLEDRLVKEFIKNNADKLKVCSKKPITPSDEELLYNKRARSAKLRCAKLCYNEKKDEAFDS.

S-adenosyl-L-methionine-binding positions include 30–32 (GGH), Asp-49, Phe-77, Asp-95, and Gln-102.

This sequence belongs to the methyltransferase superfamily. RsmH family.

The protein localises to the cytoplasm. It carries out the reaction cytidine(1402) in 16S rRNA + S-adenosyl-L-methionine = N(4)-methylcytidine(1402) in 16S rRNA + S-adenosyl-L-homocysteine + H(+). Functionally, specifically methylates the N4 position of cytidine in position 1402 (C1402) of 16S rRNA. The chain is Ribosomal RNA small subunit methyltransferase H from Hydrogenobaculum sp. (strain Y04AAS1).